We begin with the raw amino-acid sequence, 338 residues long: Large ribosomal subunit protein uL10 (338 aa).

The disordered stretch occupies residues 295–338 (EVPTIQPTTPPEKKEEEEKKEEEEEEAETVSEEELAEGLGALFG). The segment covering 312–330 (EKKEEEEEEAETVSEEELA) has biased composition (acidic residues).

The protein belongs to the universal ribosomal protein uL10 family. In terms of assembly, part of the 50S ribosomal subunit. Forms part of the ribosomal stalk which helps the ribosome interact with GTP-bound translation factors. Forms a heptameric L10(L12)2(L12)2(L12)2 complex, where L10 forms an elongated spine to which the L12 dimers bind in a sequential fashion.

Forms part of the ribosomal stalk, playing a central role in the interaction of the ribosome with GTP-bound translation factors. The chain is Large ribosomal subunit protein uL10 from Staphylothermus marinus (strain ATCC 43588 / DSM 3639 / JCM 9404 / F1).